We begin with the raw amino-acid sequence, 364 residues long: Dihydroorotate dehydrogenase (quinone) (364 aa).

FMN-binding positions include 62 to 66 and Thr86; that span reads AGFDK. Residue Lys66 participates in substrate binding. 111-115 provides a ligand contact to substrate; sequence NRMGF. FMN is bound by residues Asn142 and Asn175. Asn175 provides a ligand contact to substrate. The active-site Nucleophile is the Ser178. A substrate-binding site is contributed by Asn180. Positions 216 and 244 each coordinate FMN. 245-246 contributes to the substrate binding site; the sequence is NT. Residues Gly267, Gly296, and 317–318 contribute to the FMN site; that span reads YT.

Belongs to the dihydroorotate dehydrogenase family. Type 2 subfamily. In terms of assembly, monomer. FMN is required as a cofactor.

The protein resides in the cell membrane. It carries out the reaction (S)-dihydroorotate + a quinone = orotate + a quinol. It functions in the pathway pyrimidine metabolism; UMP biosynthesis via de novo pathway; orotate from (S)-dihydroorotate (quinone route): step 1/1. Its function is as follows. Catalyzes the conversion of dihydroorotate to orotate with quinone as electron acceptor. The sequence is that of Dihydroorotate dehydrogenase (quinone) from Anaeromyxobacter sp. (strain K).